The chain runs to 74 residues: ATP synthase subunit c (74 aa).

A run of 2 helical transmembrane segments spans residues 8-28 (FIGI…VSNI) and 52-72 (IGAG…MLLI).

This sequence belongs to the ATPase C chain family. In terms of assembly, F-type ATPases have 2 components, F(1) - the catalytic core - and F(0) - the membrane proton channel. F(1) has five subunits: alpha(3), beta(3), gamma(1), delta(1), epsilon(1). F(0) has three main subunits: a(1), b(2) and c(10-14). The alpha and beta chains form an alternating ring which encloses part of the gamma chain. F(1) is attached to F(0) by a central stalk formed by the gamma and epsilon chains, while a peripheral stalk is formed by the delta and b chains.

It localises to the cell inner membrane. Functionally, f(1)F(0) ATP synthase produces ATP from ADP in the presence of a proton or sodium gradient. F-type ATPases consist of two structural domains, F(1) containing the extramembraneous catalytic core and F(0) containing the membrane proton channel, linked together by a central stalk and a peripheral stalk. During catalysis, ATP synthesis in the catalytic domain of F(1) is coupled via a rotary mechanism of the central stalk subunits to proton translocation. Key component of the F(0) channel; it plays a direct role in translocation across the membrane. A homomeric c-ring of between 10-14 subunits forms the central stalk rotor element with the F(1) delta and epsilon subunits. The polypeptide is ATP synthase subunit c (Rickettsia akari (strain Hartford)).